The following is a 93-amino-acid chain: Small ribosomal subunit protein uS19 (93 aa).

The protein belongs to the universal ribosomal protein uS19 family.

Protein S19 forms a complex with S13 that binds strongly to the 16S ribosomal RNA. The polypeptide is Small ribosomal subunit protein uS19 (Wolinella succinogenes (strain ATCC 29543 / DSM 1740 / CCUG 13145 / JCM 31913 / LMG 7466 / NCTC 11488 / FDC 602W) (Vibrio succinogenes)).